The primary structure comprises 154 residues: Ribonuclease H (154 aa).

Positions Glu-3–Val-144 constitute an RNase H type-1 domain. Residues Asp-12, Glu-50, Asp-72, and Asp-136 each coordinate Mg(2+).

Belongs to the RNase H family. As to quaternary structure, monomer. It depends on Mg(2+) as a cofactor.

It localises to the cytoplasm. The catalysed reaction is Endonucleolytic cleavage to 5'-phosphomonoester.. Functionally, endonuclease that specifically degrades the RNA of RNA-DNA hybrids. The protein is Ribonuclease H of Bradyrhizobium diazoefficiens (strain JCM 10833 / BCRC 13528 / IAM 13628 / NBRC 14792 / USDA 110).